Consider the following 331-residue polypeptide: tRNA N6-adenosine threonylcarbamoyltransferase (331 aa).

Fe cation-binding residues include histidine 109, histidine 113, and tyrosine 130. Residues 130-134 (YLSGG), aspartate 162, aspartate 183, and serine 262 contribute to the substrate site. A Fe cation-binding site is contributed by aspartate 290.

Belongs to the KAE1 / TsaD family. It depends on Fe(2+) as a cofactor.

The protein resides in the cytoplasm. It catalyses the reaction L-threonylcarbamoyladenylate + adenosine(37) in tRNA = N(6)-L-threonylcarbamoyladenosine(37) in tRNA + AMP + H(+). In terms of biological role, required for the formation of a threonylcarbamoyl group on adenosine at position 37 (t(6)A37) in tRNAs that read codons beginning with adenine. Is probably involved in the transfer of the threonylcarbamoyl moiety of threonylcarbamoyl-AMP (TC-AMP) to the N6 group of A37. In Metallosphaera sedula (strain ATCC 51363 / DSM 5348 / JCM 9185 / NBRC 15509 / TH2), this protein is tRNA N6-adenosine threonylcarbamoyltransferase.